The chain runs to 323 residues: Sphingolipid delta(4)-desaturase/C4-monooxygenase DES2 (323 aa).

Gly-2 is lipidated: N-myristoyl glycine. 2 consecutive transmembrane segments (helical) span residues 41 to 61 (PNIK…CWLV) and 68 to 88 (WLLF…TLAI). Residues 89-93 (HDISH) carry the Histidine box-1 motif. The segment at 95-99 (TAFGT) is required for C4-hydroxylase activity. Positions 128–132 (HVDHH) match the Histidine box-2 motif. A helical transmembrane segment spans residues 200–220 (IFALWGIKAIVYLLASSLLGL). The Histidine box-3 signature appears at 259-263 (HVEHH).

It belongs to the fatty acid desaturase type 1 family. DEGS subfamily.

The protein localises to the endoplasmic reticulum membrane. It carries out the reaction a dihydroceramide + 2 Fe(II)-[cytochrome b5] + O2 + 2 H(+) = a phytoceramide + 2 Fe(III)-[cytochrome b5] + H2O. The catalysed reaction is an N-acylsphinganine + 2 Fe(II)-[cytochrome b5] + O2 + 2 H(+) = an N-acylsphing-4-enine + 2 Fe(III)-[cytochrome b5] + 2 H2O. It catalyses the reaction N-octanoylsphinganine + 2 Fe(II)-[cytochrome b5] + O2 + 2 H(+) = N-octanoyl-4-hydroxysphinganine + 2 Fe(III)-[cytochrome b5] + H2O. The enzyme catalyses an N-acylsphinganine + 2 Fe(II)-[cytochrome b5] + O2 + 2 H(+) = an N-acyl-(4R)-4-hydroxysphinganine + 2 Fe(III)-[cytochrome b5] + H2O. The protein operates within membrane lipid metabolism; sphingolipid biosynthesis. In terms of biological role, bifunctional enzyme which acts both as a sphingolipid delta(4)-desaturase and a sphingolipid C4-monooxygenase. The sequence is that of Sphingolipid delta(4)-desaturase/C4-monooxygenase DES2 from Rattus norvegicus (Rat).